Here is an 85-residue protein sequence, read N- to C-terminus: uncharacterized protein (85 aa).

This is an uncharacterized protein from Methanocaldococcus jannaschii (strain ATCC 43067 / DSM 2661 / JAL-1 / JCM 10045 / NBRC 100440) (Methanococcus jannaschii).